Reading from the N-terminus, the 373-residue chain is Glutamine synthetase (373 aa).

The residue at position 2 (Thr2) is an N-acetylthreonine. The required for glutamine-induced ubiquitination by CRL4(CRBN) and proteasomal degradation stretch occupies residues 2 to 25 (TTSASSHLNKGIKQVYMSLPQGEK). N6-acetyllysine; by EP300 is present on residues Lys11 and Lys14. The region spanning 24–106 (EKVQAMYIWI…VLCEVFKYNR (83 aa)) is the GS beta-grasp domain. Position 104 is a phosphotyrosine (Tyr104). Residues 113 to 373 (LRHTCKRIMD…TGDEPFQYKN (261 aa)) enclose the GS catalytic domain. Residue Glu134 participates in ATP binding. Glu134, Glu136, Glu196, and Glu203 together coordinate Mn(2+). Residue 203-208 (EFQIGP) coordinates ATP. L-glutamate is bound at residue 246–247 (NW). His253 provides a ligand contact to Mn(2+). Residues 255-257 (NFS), Arg319, and Arg324 each bind ATP. Arg319 contributes to the L-glutamate binding site. An ADP-binding site is contributed by 336–338 (YFE). Mn(2+) is bound at residue Glu338. Arg340 is a binding site for L-glutamate. A Phosphoserine modification is found at Ser343.

Belongs to the glutamine synthetase family. Decamer; composed of two pentamers. Interacts with PALMD. Interacts with RHOJ. Interacts with BEST2; this interaction tethers a fraction of GLUL to the membrane, causing a decrease of cytosolic glutamine synthase (GS) activity and inhibits the chloride channel activity of BEST2 by affecting the gating at the aperture in the absence of intracellular glutamate. Mg(2+) serves as cofactor. It depends on Mn(2+) as a cofactor. Post-translationally, acetylated by EP300/p300; acetylation is stimulated by increased glutamine levels and promotes ubiquitin-mediated proteasomal degradation. Palmitoylated; undergoes autopalmitoylation. In terms of processing, ubiquitinated by ZNRF1. Ubiquitinated by the DCX (DDB1-CUL4-X-box) E3 ubiquitin-protein ligase complex called CRL4(CRBN), leading to proteasomal degradation. Expressed in endothelial cells.

It is found in the cytoplasm. The protein localises to the cytosol. The protein resides in the microsome. Its subcellular location is the mitochondrion. It localises to the cell membrane. It catalyses the reaction L-glutamate + NH4(+) + ATP = L-glutamine + ADP + phosphate + H(+). It carries out the reaction L-cysteinyl-[protein] + hexadecanoyl-CoA = S-hexadecanoyl-L-cysteinyl-[protein] + CoA. With respect to regulation, glutamine synthetase activity is inhibited by methionine sulfoximine (MSO). In terms of biological role, glutamine synthetase that catalyzes the ATP-dependent conversion of glutamate and ammonia to glutamine. Its role depends on tissue localization: in the brain, it regulates the levels of toxic ammonia and converts neurotoxic glutamate to harmless glutamine, whereas in the liver, it is one of the enzymes responsible for the removal of ammonia. Plays a key role in ammonium detoxification during erythropoiesis: the glutamine synthetase activity is required to remove ammonium generated by porphobilinogen deaminase (HMBS) during heme biosynthesis to prevent ammonium accumulation and oxidative stress. Essential for proliferation of fetal skin fibroblasts. Independently of its glutamine synthetase activity, required for endothelial cell migration during vascular development: acts by regulating membrane localization and activation of the GTPase RHOJ, possibly by promoting RHOJ palmitoylation. May act as a palmitoyltransferase for RHOJ: able to autopalmitoylate and then transfer the palmitoyl group to RHOJ. Plays a role in ribosomal 40S subunit biogenesis. Through the interaction with BEST2, inhibits BEST2 channel activity by affecting the gating at the aperture in the absence of intracellular L-glutamate, but sensitizes BEST2 to intracellular L-glutamate, which promotes the opening of BEST2 and thus relieves its inhibitory effect on BEST2. The chain is Glutamine synthetase from Homo sapiens (Human).